Reading from the N-terminus, the 414-residue chain is Esterase FrsA (414 aa).

It belongs to the FrsA family.

The catalysed reaction is a carboxylic ester + H2O = an alcohol + a carboxylate + H(+). Its function is as follows. Catalyzes the hydrolysis of esters. This is Esterase FrsA from Escherichia coli O17:K52:H18 (strain UMN026 / ExPEC).